Here is a 374-residue protein sequence, read N- to C-terminus: Biotin synthase (374 aa).

The Radical SAM core domain maps to 51–278; sequence NTVKVNYLVN…DTEIRIAGGR (228 aa). Cysteine 66, cysteine 70, and cysteine 73 together coordinate [4Fe-4S] cluster. [2Fe-2S] cluster contacts are provided by cysteine 110, cysteine 143, cysteine 203, and arginine 273. Residues 346–374 form a disordered region; the sequence is IAGGTSVAGSAPDPAIRRRGAGTDVPANA.

Belongs to the radical SAM superfamily. Biotin synthase family. As to quaternary structure, homodimer. [4Fe-4S] cluster serves as cofactor. Requires [2Fe-2S] cluster as cofactor.

The catalysed reaction is (4R,5S)-dethiobiotin + (sulfur carrier)-SH + 2 reduced [2Fe-2S]-[ferredoxin] + 2 S-adenosyl-L-methionine = (sulfur carrier)-H + biotin + 2 5'-deoxyadenosine + 2 L-methionine + 2 oxidized [2Fe-2S]-[ferredoxin]. The protein operates within cofactor biosynthesis; biotin biosynthesis; biotin from 7,8-diaminononanoate: step 2/2. Its function is as follows. Catalyzes the conversion of dethiobiotin (DTB) to biotin by the insertion of a sulfur atom into dethiobiotin via a radical-based mechanism. The sequence is that of Biotin synthase from Nocardioides sp. (strain ATCC BAA-499 / JS614).